The primary structure comprises 216 residues: ATP phosphoribosyltransferase (216 aa).

Belongs to the ATP phosphoribosyltransferase family. Short subfamily. Heteromultimer composed of HisG and HisZ subunits.

Its subcellular location is the cytoplasm. It carries out the reaction 1-(5-phospho-beta-D-ribosyl)-ATP + diphosphate = 5-phospho-alpha-D-ribose 1-diphosphate + ATP. It participates in amino-acid biosynthesis; L-histidine biosynthesis; L-histidine from 5-phospho-alpha-D-ribose 1-diphosphate: step 1/9. Functionally, catalyzes the condensation of ATP and 5-phosphoribose 1-diphosphate to form N'-(5'-phosphoribosyl)-ATP (PR-ATP). Has a crucial role in the pathway because the rate of histidine biosynthesis seems to be controlled primarily by regulation of HisG enzymatic activity. This Nitrosomonas eutropha (strain DSM 101675 / C91 / Nm57) protein is ATP phosphoribosyltransferase.